The primary structure comprises 392 residues: Phosphoglycerate kinase (392 aa).

Substrate is bound by residues 21–23 (DLN), arginine 36, 59–62 (HLGR), arginine 113, and arginine 146. ATP-binding positions include lysine 197, glutamate 319, and 345-348 (GGDT).

It belongs to the phosphoglycerate kinase family. In terms of assembly, monomer.

The protein resides in the cytoplasm. It carries out the reaction (2R)-3-phosphoglycerate + ATP = (2R)-3-phospho-glyceroyl phosphate + ADP. Its pathway is carbohydrate degradation; glycolysis; pyruvate from D-glyceraldehyde 3-phosphate: step 2/5. This Thioalkalivibrio sulfidiphilus (strain HL-EbGR7) protein is Phosphoglycerate kinase.